The following is a 325-amino-acid chain: GMP reductase (325 aa).

Catalysis depends on cysteine 173, which acts as the Thioimidate intermediate. 202–225 contributes to the NADP(+) binding site; it reads IIADGGIRSHGDIAKSVRFGATMV.

This sequence belongs to the IMPDH/GMPR family. GuaC type 2 subfamily.

It carries out the reaction IMP + NH4(+) + NADP(+) = GMP + NADPH + 2 H(+). In terms of biological role, catalyzes the irreversible NADPH-dependent deamination of GMP to IMP. It functions in the conversion of nucleobase, nucleoside and nucleotide derivatives of G to A nucleotides, and in maintaining the intracellular balance of A and G nucleotides. This chain is GMP reductase, found in Acidovorax sp. (strain JS42).